A 427-amino-acid polypeptide reads, in one-letter code: Putative ABC transporter substrate-binding protein YesO (427 aa).

The protein belongs to the bacterial solute-binding protein 1 family.

Functionally, may play a role in the degradation of type I rhamnogalacturonan derived from plant cell walls. The chain is Putative ABC transporter substrate-binding protein YesO (yesO) from Bacillus subtilis (strain 168).